A 115-amino-acid chain; its full sequence is U3-lycotoxin-Ls1a (115 aa).

Positions 1-20 (MKFVLLFGVLLVTLFSYSSA) are cleaved as a signal peptide. Positions 21-44 (EMLDDFDQADEDELLSSIEKEEAR) are excised as a propeptide. 4 disulfide bridges follow: Cys48–Cys63, Cys55–Cys72, Cys62–Cys87, and Cys74–Cys85.

It belongs to the neurotoxin 19 (CSTX) family. 01 subfamily. As to expression, expressed by the venom gland.

The protein resides in the secreted. This is U3-lycotoxin-Ls1a from Lycosa singoriensis (Wolf spider).